The following is a 734-amino-acid chain: Polyribonucleotide nucleotidyltransferase (734 aa).

Residues Asp-503 and Asp-509 each coordinate Mg(2+). In terms of domain architecture, KH spans Pro-570–Ile-629. The S1 motif domain maps to Gly-639 to Lys-713.

This sequence belongs to the polyribonucleotide nucleotidyltransferase family. The cofactor is Mg(2+).

The protein resides in the cytoplasm. It carries out the reaction RNA(n+1) + phosphate = RNA(n) + a ribonucleoside 5'-diphosphate. Involved in mRNA degradation. Catalyzes the phosphorolysis of single-stranded polyribonucleotides processively in the 3'- to 5'-direction. This is Polyribonucleotide nucleotidyltransferase from Chlorobium phaeobacteroides (strain BS1).